Consider the following 365-residue polypeptide: Autoinducer 2-binding periplasmic protein LuxP (365 aa).

An N-terminal signal peptide occupies residues 1-23 (MKKALLFSLISMVGFSPASQATQ).

Belongs to the bacterial solute-binding protein 2 family.

It is found in the periplasm. In terms of biological role, binds to the signaling molecule autoinducer 2 (AI-2), a furanosyl borate diester, (3a-methyl-5,6-dihydrofuro-[2,3d][1,3,2]dioxaborole-2,2,6,6a-tetraol). This complex then interacts with the LuxQ sensor protein. The chain is Autoinducer 2-binding periplasmic protein LuxP (luxP) from Vibrio harveyi (Beneckea harveyi).